A 338-amino-acid chain; its full sequence is Ketol-acid reductoisomerase (NADP(+)) (338 aa).

In terms of domain architecture, KARI N-terminal Rossmann spans 1–181; sequence MQVYYDKDCD…GGGRTGIIET (181 aa). Residues 24–27, Arg-47, Ser-50, Ser-52, and 82–85 each bind NADP(+); these read YGSQ and DEFQ. Residue His-107 is part of the active site. An NADP(+)-binding site is contributed by Gly-133. In terms of domain architecture, KARI C-terminal knotted spans 182-327; that stretch reads TFKDETETDL…EKLRGMMPWI (146 aa). 4 residues coordinate Mg(2+): Asp-190, Glu-194, Glu-226, and Glu-230. Ser-251 is a substrate binding site.

It belongs to the ketol-acid reductoisomerase family. Requires Mg(2+) as cofactor.

It catalyses the reaction (2R)-2,3-dihydroxy-3-methylbutanoate + NADP(+) = (2S)-2-acetolactate + NADPH + H(+). It carries out the reaction (2R,3R)-2,3-dihydroxy-3-methylpentanoate + NADP(+) = (S)-2-ethyl-2-hydroxy-3-oxobutanoate + NADPH + H(+). It participates in amino-acid biosynthesis; L-isoleucine biosynthesis; L-isoleucine from 2-oxobutanoate: step 2/4. It functions in the pathway amino-acid biosynthesis; L-valine biosynthesis; L-valine from pyruvate: step 2/4. Involved in the biosynthesis of branched-chain amino acids (BCAA). Catalyzes an alkyl-migration followed by a ketol-acid reduction of (S)-2-acetolactate (S2AL) to yield (R)-2,3-dihydroxy-isovalerate. In the isomerase reaction, S2AL is rearranged via a Mg-dependent methyl migration to produce 3-hydroxy-3-methyl-2-ketobutyrate (HMKB). In the reductase reaction, this 2-ketoacid undergoes a metal-dependent reduction by NADPH to yield (R)-2,3-dihydroxy-isovalerate. This chain is Ketol-acid reductoisomerase (NADP(+)), found in Alcanivorax borkumensis (strain ATCC 700651 / DSM 11573 / NCIMB 13689 / SK2).